The sequence spans 657 residues: Sodium/glucose cotransporter 4 (657 aa).

The Extracellular segment spans residues 1-24 (MPASPEPVTATPEPEEVPAKFTLE). A helical transmembrane segment spans residues 25–45 (AADIAVVVVYFVFVLAVGIWS). Over 46–79 (SIRANRGTVGGYFLAGRSMTWWPIGASLMSSNVG) the chain is Cytoplasmic. Residues 80–100 (SGLFIGLAGTGAAGGLAVGGF) traverse the membrane as a helical segment. Over 101–104 (EWNA) the chain is Extracellular. The helical transmembrane segment at 105 to 125 (AWVLIALGWIFVPVYISAGVV) threads the bilayer. The Cytoplasmic portion of the chain corresponds to 126–147 (TMPEYLRKRFGGQRIRIYMSVL). A helical membrane pass occupies residues 148 to 168 (SLILYILTKISTDIFSGALFI). The Extracellular segment spans residues 169–180 (QVSLGWDLYLST). Residues 181-201 (VILLAVTALYTIAGGLTAVIY) form a helical membrane-spanning segment. Over 202-207 (TDALQT) the chain is Cytoplasmic. A helical transmembrane segment spans residues 208 to 228 (VIMVIGAFVLMFIAFDKVGWY). The Extracellular segment spans residues 229-265 (EGLLVQYEKAAPALTVPNTTCHLPRSDAFHIFRDPVT). N-linked (GlcNAc...) asparagine glycosylation occurs at Asn-246. Residues 266–286 (GDIPWPGLIFGLTVLATWVWC) form a helical membrane-spanning segment. The Cytoplasmic segment spans residues 287 to 307 (TDQVIVQRSLSAKNLSHAKAG). Residues 308–328 (SVLGGYLKVFPMFFVVMPGMI) traverse the membrane as a helical segment. The Extracellular segment spans residues 329–373 (SRALYPDEVACVDPDECQKICGAKVGCSNIAYPKLVVELMPVGMR). The chain crosses the membrane as a helical span at residues 374–396 (GLMIAVMMAALMSSLTSIFNSSS). The Cytoplasmic portion of the chain corresponds to 397–417 (TLFTMDIWQRIRPRASEKELM). Residues 418 to 438 (VVGRVFILLLVALSIVWIPVI) traverse the membrane as a helical segment. At 439-451 (QTANSGQLFDYIQ) the chain is on the extracellular side. Residues 452-472 (AITSFLSPPITTVFIMAIFWG) traverse the membrane as a helical segment. The Cytoplasmic portion of the chain corresponds to 473-478 (RVNEQG). The chain crosses the membrane as a helical span at residues 479-499 (AFWGLMVGLVVGMVRMIMEFV). Residues 500 to 520 (YGTPSCGETDLRPSLLKDVHY) are Extracellular-facing. Residues 521-541 (LYFALILLALTVLIITAVSLC) traverse the membrane as a helical segment. The Cytoplasmic segment spans residues 542-636 (TAPIPEKHLV…SIEEDHMWKT (95 aa)). The chain crosses the membrane as a helical span at residues 637 to 657 (VCNVNALILLTANVFLWGYFA).

The protein belongs to the sodium:solute symporter (SSF) (TC 2.A.21) family.

It is found in the membrane. Its function is as follows. Probable sodium-dependent sugar transporter. This chain is Sodium/glucose cotransporter 4 (slc5a9), found in Danio rerio (Zebrafish).